The primary structure comprises 150 residues: Small ribosomal subunit protein bS6 (150 aa).

A disordered region spans residues lysine 92 to lysine 150. Over residues alanine 98–valine 109 the composition is skewed to basic residues. Residues phenylalanine 113–arginine 129 show a composition bias toward basic and acidic residues. The span at threonine 132 to serine 141 shows a compositional bias: low complexity.

This sequence belongs to the bacterial ribosomal protein bS6 family.

Binds together with bS18 to 16S ribosomal RNA. This Mycoplasmopsis pulmonis (strain UAB CTIP) (Mycoplasma pulmonis) protein is Small ribosomal subunit protein bS6.